A 291-amino-acid chain; its full sequence is Ribonuclease Z (291 aa).

The Zn(2+) site is built by His60, His62, Asp64, His65, His132, Asp200, and His256. Asp64 serves as the catalytic Proton acceptor.

It belongs to the RNase Z family. In terms of assembly, homodimer. The cofactor is Zn(2+).

The catalysed reaction is Endonucleolytic cleavage of RNA, removing extra 3' nucleotides from tRNA precursor, generating 3' termini of tRNAs. A 3'-hydroxy group is left at the tRNA terminus and a 5'-phosphoryl group is left at the trailer molecule.. Functionally, zinc phosphodiesterase, which displays some tRNA 3'-processing endonuclease activity. Probably involved in tRNA maturation, by removing a 3'-trailer from precursor tRNA. This chain is Ribonuclease Z, found in Metallosphaera sedula (strain ATCC 51363 / DSM 5348 / JCM 9185 / NBRC 15509 / TH2).